The following is a 64-amino-acid chain: MVVKENFCGACLTIPLAFAGAGTAIGAEKAATIKKWSIVITIISLLLTVWFIYVKKCSTCKLRP.

The signal sequence occupies residues 1–26 (MVVKENFCGACLTIPLAFAGAGTAIG). A helical membrane pass occupies residues 33–53 (IKKWSIVITIISLLLTVWFIY).

The protein belongs to the IIV-6 010R family.

The protein localises to the host membrane. This is an uncharacterized protein from Aedes vexans (Inland floodwater mosquito).